We begin with the raw amino-acid sequence, 262 residues long: Beta-phosphoglucomutase (262 aa).

Asp-29 acts as the Nucleophile in catalysis. The Mg(2+) site is built by Asp-29 and Asp-31. A 4-aspartylphosphate modification is found at Asp-29. The Proton donor/acceptor role is filled by Asp-31. Residues Asp-31, Gly-79, Arg-82, Ser-157, and Asn-159 each coordinate beta-D-glucose 6-phosphate. Asp-215 provides a ligand contact to Mg(2+).

Belongs to the HAD-like hydrolase superfamily. CbbY/CbbZ/Gph/YieH family. In terms of assembly, monomer. The cofactor is Mg(2+). In terms of processing, autophosphorylated.

The enzyme catalyses beta-D-glucose 1-phosphate = beta-D-glucose 6-phosphate. Catalyzes the interconversion of D-glucose 1-phosphate (G1P) and D-glucose 6-phosphate (G6P), forming beta-D-glucose 1,6-(bis)phosphate (beta-G16P) as an intermediate. The chain is Beta-phosphoglucomutase from Mycobacterium bovis (strain ATCC BAA-935 / AF2122/97).